A 120-amino-acid polypeptide reads, in one-letter code: ATP-dependent Clp protease adapter protein ClpS (120 aa).

It belongs to the ClpS family. As to quaternary structure, binds to the N-terminal domain of the chaperone ClpA.

In terms of biological role, involved in the modulation of the specificity of the ClpAP-mediated ATP-dependent protein degradation. This is ATP-dependent Clp protease adapter protein ClpS from Pseudomonas syringae pv. syringae (strain B728a).